We begin with the raw amino-acid sequence, 297 residues long: Large ribosomal subunit protein uL18 (297 aa).

Residues 258–267 are compositionally biased toward basic residues; that stretch reads KKAHPKKRWT. Positions 258 to 277 are disordered; sequence KKAHPKKRWTEKKLTREQRQ. Positions 268–277 are enriched in basic and acidic residues; that stretch reads EKKLTREQRQ.

This sequence belongs to the universal ribosomal protein uL18 family. As to quaternary structure, component of the large ribosomal subunit (LSU).

It is found in the cytoplasm. The protein resides in the nucleus. In terms of biological role, component of the ribosome, a large ribonucleoprotein complex responsible for the synthesis of proteins in the cell. The small ribosomal subunit (SSU) binds messenger RNAs (mRNAs) and translates the encoded message by selecting cognate aminoacyl-transfer RNA (tRNA) molecules. The large subunit (LSU) contains the ribosomal catalytic site termed the peptidyl transferase center (PTC), which catalyzes the formation of peptide bonds, thereby polymerizing the amino acids delivered by tRNAs into a polypeptide chain. The nascent polypeptides leave the ribosome through a tunnel in the LSU and interact with protein factors that function in enzymatic processing, targeting, and the membrane insertion of nascent chains at the exit of the ribosomal tunnel. This Helianthus annuus (Common sunflower) protein is Large ribosomal subunit protein uL18 (RPL5A).